The chain runs to 476 residues: Glycogen synthase (476 aa).

Residue Lys-15 coordinates ADP-alpha-D-glucose.

Belongs to the glycosyltransferase 1 family. Bacterial/plant glycogen synthase subfamily.

The enzyme catalyses [(1-&gt;4)-alpha-D-glucosyl](n) + ADP-alpha-D-glucose = [(1-&gt;4)-alpha-D-glucosyl](n+1) + ADP + H(+). Its pathway is glycan biosynthesis; glycogen biosynthesis. Functionally, synthesizes alpha-1,4-glucan chains using ADP-glucose. The protein is Glycogen synthase of Yersinia enterocolitica serotype O:8 / biotype 1B (strain NCTC 13174 / 8081).